The following is a 387-amino-acid chain: Probable nitrate transporter NarT (387 aa).

Transmembrane regions (helical) follow at residues 14–34, 45–65, 69–89, 97–117, 137–157, 161–181, 211–231, 246–266, 268–288, 294–314, 330–350, and 358–378; these read TLSLVAGFMAWSIISPLMPFI, ISVILAIPVILGSVLRVPFGY, IVGAKWVFFWSFIVLLLPIFL, GMLMLSGFFLGIGGAIFSVGV, GVGNIGTAVSSFCAPVLAGAI, NTVRSYLIILSIFAILMFFLG, WYFITFGAFVAFGIFLPNFLV, GIFIALATFLRPVGGVIGDKF, AVQALIIDFVIMIIGALILSL, LFTIGCLAISICAGIGNGLIF, GIVSMMGGLGGFFPPLVITFV, and HLAFFFLAIFGVIALITMIHL.

It belongs to the major facilitator superfamily. Nitrate/nitrite porter (TC 2.A.1.8) family.

It is found in the cell membrane. Functionally, probably required for nitrate uptake under anoxic conditions. Also possibly involved in excretion of nitrite produced by the dissimilatory reduction of nitrate. The protein is Probable nitrate transporter NarT (narT) of Staphylococcus epidermidis (strain ATCC 35984 / DSM 28319 / BCRC 17069 / CCUG 31568 / BM 3577 / RP62A).